A 178-amino-acid polypeptide reads, in one-letter code: Mediator of RNA polymerase II transcription subunit 28 (178 aa).

Residues 1-43 (MAASLGGMFAGQPPGPPPPPPGLPGQASLLQAAPGAPRPSNST) are disordered. Positions 13 to 23 (PPGPPPPPPGL) are enriched in pro residues. The stretch at 109-145 (QVIKEDVSELRSELQRKDALVQKHLTKLRHWQQVLED) forms a coiled coil.

Belongs to the Mediator complex subunit 28 family. In terms of assembly, forms a ternary complex with NF2/merlin and GRB2. Binds to actin. Component of the Mediator complex, which is probably composed of MED1, MED4, MED6, MED7, MED8, MED9, MED10, MED11, MED12, MED13, MED13L, MED14, MED15, MED16, MED17, MED18, MED19, MED20, MED21, MED22, MED23, MED24, MED25, MED26, MED27, MED29, MED30, MED31, CCNC, CDK8 and CDC2L6/CDK11. The MED12, MED13, CCNC and CDK8 subunits form a distinct module termed the CDK8 module. Mediator containing the CDK8 module is less active than Mediator lacking this module in supporting transcriptional activation. Individual preparations of the Mediator complex lacking one or more distinct subunits have been variously termed ARC, CRSP, DRIP, PC2, SMCC and TRAP.

The protein resides in the nucleus. The protein localises to the cytoplasm. It is found in the membrane. May be part of a complex containing NF2/merlin that participates in cellular signaling to the actin cytoskeleton downstream of tyrosine kinase signaling pathways. Component of the Mediator complex, a coactivator involved in the regulated transcription of nearly all RNA polymerase II-dependent genes. Mediator functions as a bridge to convey information from gene-specific regulatory proteins to the basal RNA polymerase II transcription machinery. Mediator is recruited to promoters by direct interactions with regulatory proteins and serves as a scaffold for the assembly of a functional preinitiation complex with RNA polymerase II and the general transcription factors. This is Mediator of RNA polymerase II transcription subunit 28 (Med28) from Rattus norvegicus (Rat).